The primary structure comprises 429 residues: Ribosomal RNA small subunit methyltransferase B (429 aa).

S-adenosyl-L-methionine is bound by residues 254–260 (CAAPGGK), Asp277, Asp303, and Asp322. Catalysis depends on Cys375, which acts as the Nucleophile.

Belongs to the class I-like SAM-binding methyltransferase superfamily. RsmB/NOP family.

Its subcellular location is the cytoplasm. It carries out the reaction cytidine(967) in 16S rRNA + S-adenosyl-L-methionine = 5-methylcytidine(967) in 16S rRNA + S-adenosyl-L-homocysteine + H(+). In terms of biological role, specifically methylates the cytosine at position 967 (m5C967) of 16S rRNA. The chain is Ribosomal RNA small subunit methyltransferase B from Escherichia coli (strain UTI89 / UPEC).